A 185-amino-acid polypeptide reads, in one-letter code: Peptidyl-tRNA hydrolase (185 aa).

Tyr-14 lines the tRNA pocket. The active-site Proton acceptor is His-19. Positions 64, 66, and 112 each coordinate tRNA.

Belongs to the PTH family. Monomer.

Its subcellular location is the cytoplasm. The catalysed reaction is an N-acyl-L-alpha-aminoacyl-tRNA + H2O = an N-acyl-L-amino acid + a tRNA + H(+). Functionally, hydrolyzes ribosome-free peptidyl-tRNAs (with 1 or more amino acids incorporated), which drop off the ribosome during protein synthesis, or as a result of ribosome stalling. Catalyzes the release of premature peptidyl moieties from peptidyl-tRNA molecules trapped in stalled 50S ribosomal subunits, and thus maintains levels of free tRNAs and 50S ribosomes. The polypeptide is Peptidyl-tRNA hydrolase (Ligilactobacillus salivarius (strain UCC118) (Lactobacillus salivarius)).